The sequence spans 511 residues: Thioredoxin reductase 2, mitochondrial (511 aa).

Residues 1-21 (MAALRGAAARFRGRAPGGARG) constitute a mitochondrion transit peptide. Residue 29-58 (DLLVIGGGSGGLACAKEAAQLGKKVAVLDY) coordinates FAD. Cys-74 and Cys-79 are joined by a disulfide. At Lys-316 the chain carries N6-succinyllysine. His-484 acts as the Proton acceptor in catalysis. The cysteinyl-selenocysteine (Cys-Sec) cross-link spans 509–510 (CU). Sec-510 is a non-standard amino acid (selenocysteine).

It belongs to the class-I pyridine nucleotide-disulfide oxidoreductase family. In terms of assembly, homodimer. FAD serves as cofactor.

The protein localises to the mitochondrion. The catalysed reaction is [thioredoxin]-dithiol + NADP(+) = [thioredoxin]-disulfide + NADPH + H(+). Its activity is regulated as follows. Inhibited by 1-chloro-2,4-dinitrobenzene and by zinc, calcium, magnesium and Fe(2+) ions. In terms of biological role, involved in the control of reactive oxygen species levels and the regulation of mitochondrial redox homeostasis. Maintains thioredoxin in a reduced state. May play a role in redox-regulated cell signaling. In Bos taurus (Bovine), this protein is Thioredoxin reductase 2, mitochondrial (TXNRD2).